The following is a 100-amino-acid chain: Large ribosomal subunit protein uL23 (100 aa).

It belongs to the universal ribosomal protein uL23 family. Part of the 50S ribosomal subunit. Contacts protein L29, and trigger factor when it is bound to the ribosome.

Functionally, one of the early assembly proteins it binds 23S rRNA. One of the proteins that surrounds the polypeptide exit tunnel on the outside of the ribosome. Forms the main docking site for trigger factor binding to the ribosome. The protein is Large ribosomal subunit protein uL23 of Bradyrhizobium diazoefficiens (strain JCM 10833 / BCRC 13528 / IAM 13628 / NBRC 14792 / USDA 110).